Reading from the N-terminus, the 337-residue chain is Inositol 2-dehydrogenase (337 aa).

This sequence belongs to the Gfo/Idh/MocA family. In terms of assembly, homotetramer.

It carries out the reaction myo-inositol + NAD(+) = scyllo-inosose + NADH + H(+). Its function is as follows. Involved in the oxidation of myo-inositol (MI) to 2-keto-myo-inositol (2KMI or 2-inosose). In Burkholderia lata (strain ATCC 17760 / DSM 23089 / LMG 22485 / NCIMB 9086 / R18194 / 383), this protein is Inositol 2-dehydrogenase.